We begin with the raw amino-acid sequence, 607 residues long: 1-deoxy-D-xylulose-5-phosphate synthase (607 aa).

Residues histidine 63 and 104–106 each bind thiamine diphosphate; that span reads GHS. Aspartate 135 is a binding site for Mg(2+). Thiamine diphosphate is bound by residues 136–137, asparagine 164, tyrosine 271, and glutamate 351; that span reads GA. Asparagine 164 lines the Mg(2+) pocket.

Belongs to the transketolase family. DXPS subfamily. As to quaternary structure, homodimer. The cofactor is Mg(2+). Thiamine diphosphate serves as cofactor.

The enzyme catalyses D-glyceraldehyde 3-phosphate + pyruvate + H(+) = 1-deoxy-D-xylulose 5-phosphate + CO2. It participates in metabolic intermediate biosynthesis; 1-deoxy-D-xylulose 5-phosphate biosynthesis; 1-deoxy-D-xylulose 5-phosphate from D-glyceraldehyde 3-phosphate and pyruvate: step 1/1. Catalyzes the acyloin condensation reaction between C atoms 2 and 3 of pyruvate and glyceraldehyde 3-phosphate to yield 1-deoxy-D-xylulose-5-phosphate (DXP). This chain is 1-deoxy-D-xylulose-5-phosphate synthase, found in Campylobacter hominis (strain ATCC BAA-381 / DSM 21671 / CCUG 45161 / LMG 19568 / NCTC 13146 / CH001A).